Consider the following 431-residue polypeptide: L-lysine N6-monooxygenase MbtG (431 aa).

An N-terminal signal peptide occupies residues Met-1 to Ala-21.

Belongs to the lysine N(6)-hydroxylase/L-ornithine N(5)-oxygenase family. It depends on FAD as a cofactor.

It catalyses the reaction L-lysine + NADPH + O2 = N(6)-hydroxy-L-lysine + NADP(+) + H2O. It functions in the pathway siderophore biosynthesis; mycobactin biosynthesis. Functionally, flavoprotein monooxygenase required for N-hydroxylation of the two acylated lysine residues during mycobactin assembly, thus producing the hydroxamate groups necessary for iron sequestration. Is also able, but less efficiently, to hydroxylate L-lysine (non acylated) in vitro. In Mycobacterium bovis (strain ATCC BAA-935 / AF2122/97), this protein is L-lysine N6-monooxygenase MbtG (mbtG).